A 300-amino-acid chain; its full sequence is N-acetylmuramic acid 6-phosphate etherase 1 (300 aa).

The SIS domain maps to 59 to 222 (AAERFKKGGR…STGIMVKVGN (164 aa)). E87 acts as the Proton donor in catalysis. Residue E118 is part of the active site.

It belongs to the GCKR-like family. MurNAc-6-P etherase subfamily. As to quaternary structure, homodimer.

It carries out the reaction N-acetyl-D-muramate 6-phosphate + H2O = N-acetyl-D-glucosamine 6-phosphate + (R)-lactate. Its pathway is amino-sugar metabolism; N-acetylmuramate degradation. Specifically catalyzes the cleavage of the D-lactyl ether substituent of MurNAc 6-phosphate, producing GlcNAc 6-phosphate and D-lactate. In Enterococcus faecalis (strain ATCC 700802 / V583), this protein is N-acetylmuramic acid 6-phosphate etherase 1.